The sequence spans 697 residues: Polyribonucleotide nucleotidyltransferase (697 aa).

Aspartate 488 and aspartate 494 together coordinate Mg(2+). In terms of domain architecture, KH spans 555-614 (PTFEVITINPDKIRDVIGKGGATIRQITEETKAAIDIEDNGTVRVFGETKAAARAAIAKI). The S1 motif domain maps to 624–692 (GKIYDGKVIR…NRGRIKLSMK (69 aa)).

Belongs to the polyribonucleotide nucleotidyltransferase family. As to quaternary structure, component of the RNA degradosome, which is a multiprotein complex involved in RNA processing and mRNA degradation. It depends on Mg(2+) as a cofactor.

The protein resides in the cytoplasm. The enzyme catalyses RNA(n+1) + phosphate = RNA(n) + a ribonucleoside 5'-diphosphate. Functionally, involved in mRNA degradation. Catalyzes the phosphorolysis of single-stranded polyribonucleotides processively in the 3'- to 5'-direction. The polypeptide is Polyribonucleotide nucleotidyltransferase (Acinetobacter baylyi (strain ATCC 33305 / BD413 / ADP1)).